Here is a 1092-residue protein sequence, read N- to C-terminus: SUMO-specific isopeptidase USPL1 (1092 aa).

2 disordered regions span residues 145-168 and 185-207; these read VYDE…TADS and TKDP…EGCT. Composition is skewed to polar residues over residues 148–163 and 197–206; these read ETSS…QNPI and GRPSPQNEGC. The region spanning 227–500 is the USP domain; that stretch reads VQWKNAYALC…EIHIVIWERK (274 aa). The Nucleophile role is filled by Cys-236. The segment at 236–495 is SUMO-binding; sequence CWLDCILSAL…EVPASEIHIV (260 aa). The active-site Proton acceptor is His-456. Disordered regions lie at residues 713–749, 797–859, and 904–930; these read LKPE…SLKE, GGFK…STSC, and AALM…GSPN. Residues 732–748 show a composition bias toward polar residues; it reads ADSQTTTSKSLQNQSLK. The span at 810–819 shows a compositional bias: basic residues; the sequence is HVSKKARKSA. The span at 821 to 832 shows a compositional bias: pro residues; sequence KPPPISKPPAGP. Phosphoserine is present on Ser-909.

This sequence belongs to the peptidase C19 family. As to quaternary structure, interacts with ELL.

The protein resides in the nucleus. It localises to the cajal body. Functionally, SUMO-specific isopeptidase involved in protein desumoylation. Specifically binds SUMO proteins with a higher affinity for SUMO2 and SUMO3 which it cleaves more efficiently. Also able to process full-length SUMO proteins to their mature forms. Plays a key role in RNA polymerase-II-mediated snRNA transcription in the Cajal bodies. Is a component of complexes that can bind to U snRNA genes. This is SUMO-specific isopeptidase USPL1 (USPL1) from Homo sapiens (Human).